The sequence spans 172 residues: Large ribosomal subunit protein bL17 (172 aa).

The tract at residues 153–172 is disordered; that stretch reads AQAAEPVAAAEPATPATTAG.

Belongs to the bacterial ribosomal protein bL17 family. Part of the 50S ribosomal subunit. Contacts protein L32.

The chain is Large ribosomal subunit protein bL17 from Sorangium cellulosum (strain So ce56) (Polyangium cellulosum (strain So ce56)).